The primary structure comprises 346 residues: Small ribosomal subunit biogenesis GTPase RsgA (346 aa).

The interval 1 to 26 (MAKRKLTQNQTRRIQSNNAKTLHRHK) is disordered. The segment covering 7–20 (TQNQTRRIQSNNAK) has biased composition (polar residues). Positions 103-271 (ENEISRPDYY…LIDSPGIREF (169 aa)) constitute a CP-type G domain. GTP is bound by residues 159–162 (NKVD) and 213–221 (GQSGVGKSS). Zn(2+)-binding residues include cysteine 295, cysteine 300, histidine 302, and cysteine 308.

This sequence belongs to the TRAFAC class YlqF/YawG GTPase family. RsgA subfamily. Monomer. Associates with 30S ribosomal subunit, binds 16S rRNA. Zn(2+) serves as cofactor.

It localises to the cytoplasm. In terms of biological role, one of several proteins that assist in the late maturation steps of the functional core of the 30S ribosomal subunit. Helps release RbfA from mature subunits. May play a role in the assembly of ribosomal proteins into the subunit. Circularly permuted GTPase that catalyzes slow GTP hydrolysis, GTPase activity is stimulated by the 30S ribosomal subunit. This chain is Small ribosomal subunit biogenesis GTPase RsgA, found in Haemophilus influenzae (strain 86-028NP).